Consider the following 129-residue polypeptide: Holo-[acyl-carrier-protein] synthase (129 aa).

Residues D8 and E60 each coordinate Mg(2+).

This sequence belongs to the P-Pant transferase superfamily. AcpS family. It depends on Mg(2+) as a cofactor.

The protein resides in the cytoplasm. The enzyme catalyses apo-[ACP] + CoA = holo-[ACP] + adenosine 3',5'-bisphosphate + H(+). Functionally, transfers the 4'-phosphopantetheine moiety from coenzyme A to a Ser of acyl-carrier-protein. This is Holo-[acyl-carrier-protein] synthase from Anaeromyxobacter sp. (strain Fw109-5).